The chain runs to 344 residues: L-rhamnose-proton symporter (344 aa).

The next 10 membrane-spanning stretches (helical) occupy residues 4-24 (AITMGIFWHLIGAASAACFYA), 38-58 (WSVGGIVSWIILPWAISALLL), 68-88 (FSLSTLLPVFLFGAMWGIGNI), 101-121 (MGIGIAIGITLIVGTLMTPII), 137-157 (TLLGVLVALIGVGIVTRAGQL), 175-195 (LVLAVMCGIFSAGMSFAMNAA), 214-234 (LPSYVIIMGGGAIINLGFCFI), 259-279 (VLLSALGGLMWYLQFFFYAWG), 290-310 (ISWMLHMSFYVLCGGIVGLVL), and 323-343 (VLSLGCVVIIVAANIVGIGMA).

The protein belongs to the L-rhamnose transporter (TC 2.A.7.6) family.

The protein resides in the cell inner membrane. It catalyses the reaction L-rhamnopyranose(in) + H(+)(in) = L-rhamnopyranose(out) + H(+)(out). In terms of biological role, uptake of L-rhamnose across the cytoplasmic membrane with the concomitant transport of protons into the cell (symport system). The protein is L-rhamnose-proton symporter of Escherichia coli (strain 55989 / EAEC).